A 306-amino-acid chain; its full sequence is Ubiquitin carboxyl-terminal hydrolase RPN11 (306 aa).

An N-acetylmethionine modification is found at Met1. Positions 1-20 (MERLQRLMMNSKVGSADTGR) are disordered. The 136-residue stretch at 27–162 (VYISSIALLK…IDAFRLIDTG (136 aa)) folds into the MPN domain. His109, His111, and Asp122 together coordinate Zn(2+). A JAMM motif motif is present at residues 109-122 (HSHPGFGCWLSSVD).

The protein belongs to the peptidase M67A family. Component of the lid subcomplex of the 19S proteasome regulatory particle complex (also named PA700 complex). The 26S proteasome consists of a 20S proteasome core and two 19S regulatory subunits. Interacts directly with RPN8 and STS1. N-acetylated by NAT3.

The catalysed reaction is Thiol-dependent hydrolysis of ester, thioester, amide, peptide and isopeptide bonds formed by the C-terminal Gly of ubiquitin (a 76-residue protein attached to proteins as an intracellular targeting signal).. Component of the lid subcomplex of the 26S proteasome, a multiprotein complex involved in the ATP-dependent degradation of ubiquitinated proteins. RPN11 is the only catalytically active member of the lid and serves as the essential deubiquitinase of the proteasome. The sequence is that of Ubiquitin carboxyl-terminal hydrolase RPN11 (RPN11) from Saccharomyces cerevisiae (strain ATCC 204508 / S288c) (Baker's yeast).